The primary structure comprises 357 residues: Protein-glutamate methylesterase/protein-glutamine glutaminase (357 aa).

In terms of domain architecture, Response regulatory spans 3 to 120 (RVLVVDDSAF…SIDLYKVRDM (118 aa)). D54 carries the 4-aspartylphosphate modification. Positions 161–355 (FRAGKQLICI…AAIMTYMKKE (195 aa)) constitute a CheB-type methylesterase domain. Residues S173, H200, and D296 contribute to the active site.

Belongs to the CheB family. In terms of processing, phosphorylated by CheA. Phosphorylation of the N-terminal regulatory domain activates the methylesterase activity.

Its subcellular location is the cytoplasm. The catalysed reaction is [protein]-L-glutamate 5-O-methyl ester + H2O = L-glutamyl-[protein] + methanol + H(+). The enzyme catalyses L-glutaminyl-[protein] + H2O = L-glutamyl-[protein] + NH4(+). Its function is as follows. Involved in chemotaxis. Part of a chemotaxis signal transduction system that modulates chemotaxis in response to various stimuli. Catalyzes the demethylation of specific methylglutamate residues introduced into the chemoreceptors (methyl-accepting chemotaxis proteins or MCP) by CheR. Also mediates the irreversible deamidation of specific glutamine residues to glutamic acid. This is Protein-glutamate methylesterase/protein-glutamine glutaminase from Bacillus licheniformis (strain ATCC 14580 / DSM 13 / JCM 2505 / CCUG 7422 / NBRC 12200 / NCIMB 9375 / NCTC 10341 / NRRL NRS-1264 / Gibson 46).